The sequence spans 905 residues: Protein translocase subunit SecA (905 aa).

Residues Gln89, Gly107 to Thr111, and Asp502 contribute to the ATP site. A disordered region spans residues Glu837–Arg885. The span at Lys852–Lys865 shows a compositional bias: polar residues. Cys889, Cys891, Cys900, and His901 together coordinate Zn(2+).

It belongs to the SecA family. As to quaternary structure, monomer and homodimer. Part of the essential Sec protein translocation apparatus which comprises SecA, SecYEG and auxiliary proteins SecDF-YajC and YidC. Zn(2+) is required as a cofactor.

It is found in the cell inner membrane. It localises to the cytoplasm. It catalyses the reaction ATP + H2O + cellular proteinSide 1 = ADP + phosphate + cellular proteinSide 2.. Functionally, part of the Sec protein translocase complex. Interacts with the SecYEG preprotein conducting channel. Has a central role in coupling the hydrolysis of ATP to the transfer of proteins into and across the cell membrane, serving both as a receptor for the preprotein-SecB complex and as an ATP-driven molecular motor driving the stepwise translocation of polypeptide chains across the membrane. This chain is Protein translocase subunit SecA, found in Bartonella henselae (strain ATCC 49882 / DSM 28221 / CCUG 30454 / Houston 1) (Rochalimaea henselae).